Consider the following 526-residue polypeptide: Fatty-acid amide hydrolase 2-B (526 aa).

A helical transmembrane segment spans residues 12 to 32; it reads CLLVLVSGLFLALFRLLSPGT. Residues Lys128 and Ser203 each act as charge relay system in the active site. Ser227 (acyl-ester intermediate) is an active-site residue.

It belongs to the amidase family.

The protein localises to the membrane. The enzyme catalyses N-(5Z,8Z,11Z,14Z-eicosatetraenoyl)-ethanolamine + H2O = ethanolamine + (5Z,8Z,11Z,14Z)-eicosatetraenoate. It carries out the reaction (9Z)-octadecenamide + H2O = (9Z)-octadecenoate + NH4(+). The protein is Fatty-acid amide hydrolase 2-B (faah2b) of Danio rerio (Zebrafish).